We begin with the raw amino-acid sequence, 382 residues long: Secreted RxLR effector protein 118 (382 aa).

The N-terminal stretch at Met-1–Ala-21 is a signal peptide. The RxLR-dEER signature appears at Arg-48–Arg-65. Residues Met-308 to Asn-382 form a disordered region. Positions Lys-310 to Arg-323 are enriched in polar residues.

It belongs to the RxLR effector family.

It localises to the secreted. The protein localises to the host nucleus. Secreted effector that completely suppresses the host cell death induced by cell death-inducing proteins. This chain is Secreted RxLR effector protein 118, found in Plasmopara viticola (Downy mildew of grapevine).